We begin with the raw amino-acid sequence, 542 residues long: Chaperonin GroEL (542 aa).

ATP-binding positions include 29–32, 86–90, Gly413, 478–480, and Asp494; these read TLGP, DGTTT, and DAL.

The protein belongs to the chaperonin (HSP60) family. Forms a cylinder of 14 subunits composed of two heptameric rings stacked back-to-back. Interacts with the co-chaperonin GroES.

The protein resides in the cytoplasm. It catalyses the reaction ATP + H2O + a folded polypeptide = ADP + phosphate + an unfolded polypeptide.. Its function is as follows. Together with its co-chaperonin GroES, plays an essential role in assisting protein folding. The GroEL-GroES system forms a nano-cage that allows encapsulation of the non-native substrate proteins and provides a physical environment optimized to promote and accelerate protein folding. This is Chaperonin GroEL from Clostridioides difficile (strain 630) (Peptoclostridium difficile).